The following is a 387-amino-acid chain: Alpha-sarcoglycan (387 aa).

The signal sequence occupies residues 1–23; the sequence is MAETLFWTPLLVVLLAGLGDTEA. The Extracellular segment spans residues 24–290; sequence QQTTLHPLVG…APDRDFLVDA (267 aa). 2 N-linked (GlcNAc...) asparagine glycosylation sites follow: Asn174 and Asn246. Residues 291–311 traverse the membrane as a helical segment; the sequence is LVTLLVPLLVALLLTLLLAYV. Over 312–387 the chain is Cytoplasmic; it reads MCCRREGRLK…AQVPLILDQH (76 aa). Residue Ser377 is modified to Phosphoserine.

Belongs to the sarcoglycan alpha/epsilon family. As to quaternary structure, interacts with the syntrophin SNTA1. Cross-link to form 2 major subcomplexes: one consisting of SGCB, SGCD and SGCG and the other consisting of SGCB and SGCD. The association between SGCB and SGCG is particularly strong while SGCA is loosely associated with the other sarcoglycans. Most strongly expressed in skeletal muscle. Also expressed in cardiac muscle and, at much lower levels, in lung. In the fetus, most abundant in cardiac muscle and, at lower levels, in lung. Also detected in liver and kidney. Not expressed in brain.

The protein localises to the cell membrane. It is found in the sarcolemma. It localises to the cytoplasm. Its subcellular location is the cytoskeleton. Component of the sarcoglycan complex, a subcomplex of the dystrophin-glycoprotein complex which forms a link between the F-actin cytoskeleton and the extracellular matrix. This chain is Alpha-sarcoglycan (SGCA), found in Homo sapiens (Human).